The following is a 625-amino-acid chain: QCMQLETSGQMRRCVSQCDKRFEEDIDWSKYDNQEDPQTECQQCQRRCRQQESDPRQQQYCQRRCKEICEEEEEYNRQRDPQQQYEQCQKRCQRRETEPRHMQICQQRCERRYEKEKRKQQKRYEEQQREDEEKYEERMKEGDNKRDPQQREYEDCRRHCEQQEPRLQYQCQRRCQEQQRQHGRGGDLMNPQRGGSGRYEEGEEKQSDNPYYFDERSLSTRFRTEEGHISVLENFYGRSKLLRALKNYRLVLLEANPNAFVLPTHLDADAILLVIGGRGALKMIHRDNRESYNLECGDVIRIPAGTTFYLINRDNNERLHIAKFLQTISTPGQYKEFFPAGGQNPEPYLSTFSKEILEAALNTQTERLRGVLGQQREGVIIRASQEQIRELTRDDSESRRWHIRRGGESSRGPYNLFNKRPLYSNKYGQAYEVKPEDYRQLQDMDVSVFIANITQGSMMGPFFNTRSTKVVVVASGEADVEMACPHLSGRHGGRGGGKRHEEEEEVHYEQVRARLSKREAIVVLAGHPVVFVSSGNENLLLFAFGINAQNNHENFLAGRERNVLQQIEPQAMELAFAASRKEVEELFNSQDESIFFPGPRQHQQQSPRSTKQQQPLVSILDFVGF.

Disordered stretches follow at residues 120 to 152 and 180 to 212; these read QQKR…QQRE and RQHG…NPYY. Over residues 198 to 212 the composition is skewed to basic and acidic residues; the sequence is RYEEGEEKQSDNPYY. Cupin type-1 domains follow at residues 230 to 369 and 414 to 584; these read SVLE…ERLR and YNLF…KEVE. Residues 594–614 are disordered; it reads IFFPGPRQHQQQSPRSTKQQQ. Low complexity predominate over residues 601–614; sequence QHQQQSPRSTKQQQ.

This sequence belongs to the 7S seed storage protein family.

Its subcellular location is the secreted. Antimicrobial peptides 2b, 2c and 2d have antibacterial and antifungal activity against a range of species. This Macadamia integrifolia (Macadamia nut) protein is Vicilin-like antimicrobial peptides 2-3.